Consider the following 164-residue polypeptide: CASP-like protein 1C1 (164 aa).

The Cytoplasmic segment spans residues 1-7 (MVKLTKR). The helical transmembrane segment at 8–28 (IGGLVLRLAAFGAALAALIVM) threads the bilayer. Residues 29 to 51 (ITSRERASFLAISLEAKYTDMAA) are Extracellular-facing. The chain crosses the membrane as a helical span at residues 52–72 (FKYFVIANAVVSVYSFLVLFL). At 73-80 (PKESLLWK) the chain is on the cytoplasmic side. Residues 81 to 101 (FVVVLDLVMTMLLTSSLSAAL) traverse the membrane as a helical segment. At 102 to 129 (AVAQVGKKGNANAGWLPICGQVPKFCDQ) the chain is on the extracellular side. The chain crosses the membrane as a helical span at residues 130 to 150 (ITGALIAGFVALVLYVLLLLY). The Cytoplasmic portion of the chain corresponds to 151-164 (SLHAVVDPFLLQKS).

This sequence belongs to the Casparian strip membrane proteins (CASP) family. In terms of assembly, homodimer and heterodimers. Expressed in the stele of the root.

It is found in the cell membrane. The chain is CASP-like protein 1C1 from Arabidopsis thaliana (Mouse-ear cress).